We begin with the raw amino-acid sequence, 287 residues long: Damage-control phosphatase PH1575 (287 aa).

Residues Cys7 to Cys10 carry the Subfamily I CxxC motif motif. 3 residues coordinate Mn(2+): Asp156, Asn157, and Asp191. A Subfamily I GNFE motif motif is present at residues Gly243–Glu246. Residues Lys263–Cys264 carry the Subfamily I KC motif motif.

Belongs to the damage-control phosphatase family. Nucleotides phosphatase I subfamily. It depends on Mn(2+) as a cofactor. Requires Ni(2+) as cofactor. [2Fe-2S] cluster serves as cofactor.

With respect to regulation, activity is strongly promoted by Co(2+), Ni(2+), Mg(2+), Mn(2+), Ca(2+), Zn(2+) and Cu(2+). Activity is inhibited by EDTA. Functionally, metal-dependent phosphatase with probable damage-control functions. Shows phosphatase activity against p-nitrophenyl phosphate (pNPP), but natural substrates have not been identified yet. Low phosphatase activity against 8-oxo nucleotides suggests that it could hydrolyze oxidatively damaged purine nucleotides or their biosynthetic intermediates. The protein is Damage-control phosphatase PH1575 of Pyrococcus horikoshii (strain ATCC 700860 / DSM 12428 / JCM 9974 / NBRC 100139 / OT-3).